The sequence spans 157 residues: Endoribonuclease YbeY (157 aa).

Residues His-114, His-118, and His-124 each contribute to the Zn(2+) site.

This sequence belongs to the endoribonuclease YbeY family. Zn(2+) serves as cofactor.

It is found in the cytoplasm. Single strand-specific metallo-endoribonuclease involved in late-stage 70S ribosome quality control and in maturation of the 3' terminus of the 16S rRNA. In Salmonella dublin (strain CT_02021853), this protein is Endoribonuclease YbeY.